The primary structure comprises 269 residues: Probable ribosomal RNA small subunit methyltransferase A (269 aa).

Positions 23, 25, 50, 71, 95, and 110 each coordinate S-adenosyl-L-methionine.

It belongs to the class I-like SAM-binding methyltransferase superfamily. rRNA adenine N(6)-methyltransferase family. RsmA subfamily.

It is found in the cytoplasm. In terms of biological role, specifically dimethylates two adjacent adenosines in the loop of a conserved hairpin near the 3'-end of 16S rRNA in the 30S particle. May play a critical role in biogenesis of 30S subunits. This Pyrococcus abyssi (strain GE5 / Orsay) protein is Probable ribosomal RNA small subunit methyltransferase A.